We begin with the raw amino-acid sequence, 354 residues long: MMVEMDYAKKMQKCHEYVEALEEEQKKIQVFQRELPLCLELVTQAIEACRKELSGTTTTTSEQCSEQTTSVCGGPVFEEFIPIKKISSLCEEVQEEEEEDGEHESSPELVNNKKSDWLRSVQLWNHSPDLNPKEERVAKKAKVVEVKPKSGAFQPFQKRVLETDLQPAVKVASSMPATTTSSTTETCGGKSDLIKAGDEERRIEQQQSQSHTHRKQRRCWSPELHRRFLNALQQLGGSHVATPKQIRDHMKVDGLTNDEVKSHLQKYRLHTRRPAATSVAAQSTGNQQQPQFVVVGGIWVPSSQDFPPPSDVANKGGVYAPVAVAQSPKRSLERSCNSPAASSSTNTNTSTPVS.

Positions 93–102 are enriched in acidic residues; it reads VQEEEEEDGE. The interval 93–112 is disordered; it reads VQEEEEEDGEHESSPELVNN. A compositionally biased stretch (basic and acidic residues) spans 103–112; it reads HESSPELVNN. The region spanning 212 to 272 is the HTH myb-type domain; the sequence is THRKQRRCWS…HLQKYRLHTR (61 aa). Positions 243-268 form a DNA-binding region, H-T-H motif; sequence PKQIRDHMKVDGLTNDEVKSHLQKYR. Residues 324-354 form a disordered region; that stretch reads VAQSPKRSLERSCNSPAASSSTNTNTSTPVS. The span at 337-354 shows a compositional bias: low complexity; sequence NSPAASSSTNTNTSTPVS.

Its subcellular location is the nucleus. In terms of biological role, probable transcription factor involved in phosphate homeostasis. Involved in the regulation of the developmental response of lateral roots, acquisition and/or mobilization of phosphate and expression of a subset of genes involved in phosphate sensing and signaling pathway. Is a target of the transcription factor PHR1. The polypeptide is Transcription factor HHO2 (Arabidopsis thaliana (Mouse-ear cress)).